The chain runs to 245 residues: 14-3-3 protein zeta (245 aa).

The protein belongs to the 14-3-3 family. As to quaternary structure, homodimer.

Its subcellular location is the cytoplasm. Its function is as follows. Adapter protein implicated in the regulation of a large spectrum of both general and specialized signaling pathways. Binds to a large number of partners, usually by recognition of a phosphoserine or phosphothreonine motif. Binding generally results in the modulation of the activity of the binding partner. This is 14-3-3 protein zeta (ywhaz) from Xenopus tropicalis (Western clawed frog).